The chain runs to 358 residues: Aromatic amino acid aminotransferase (358 aa).

An N6-(pyridoxal phosphate)lysine modification is found at Lys-222.

The protein belongs to the class-II pyridoxal-phosphate-dependent aminotransferase family. Homodimer. Pyridoxal 5'-phosphate serves as cofactor.

It carries out the reaction an aromatic L-alpha-amino acid + 2-oxoglutarate = an aromatic oxo-acid + L-glutamate. Aminotransferase that catalyzes the conversion of aromatic amino acids and 2-oxoglutarate into corresponding aromatic oxo acids and L-glutamate. This chain is Aromatic amino acid aminotransferase, found in Mycobacterium sp. (strain JLS).